We begin with the raw amino-acid sequence, 129 residues long: Small ribosomal subunit protein uS11 (129 aa).

It belongs to the universal ribosomal protein uS11 family. As to quaternary structure, part of the 30S ribosomal subunit. Interacts with proteins S7 and S18. Binds to IF-3.

In terms of biological role, located on the platform of the 30S subunit, it bridges several disparate RNA helices of the 16S rRNA. Forms part of the Shine-Dalgarno cleft in the 70S ribosome. This Azoarcus sp. (strain BH72) protein is Small ribosomal subunit protein uS11.